We begin with the raw amino-acid sequence, 1166 residues long: MLKFIRGKGQQPTAERQRLQKDLFAYRKTAQHGFPHKPSALAYDPVAKLMAIGTQTGAIKVFGQPGVELYAQHTLVNNSAAELNVQLLEWVYGTGRILSLTAANQLILWEPVGTTLVPIKTLPFDGKLKKVSSLCCSLNKDLLWIGTEGGNIYQLDLKSFTIREPVIYHDVVLEQVPPTYKLNPGAIESIRQLPNSLNKLLIAYNRGLCVLWDMQTSAVERAYIAPGHGQSVGLSVNSTGTEFSWYHADGSYATWSIDNGEPPQNVNYVPYGPDPCKSINRLYKGQRGTNDVIVFSGGMPRSAYGDHNCVSVHVSDGHKVCLDFTSKVIDFFVTYKEGSDDVEVLIVLLEEELCAYDLTDPSILSIKAPYLHSVHASAVTCNYLASQVTQGVYERILRAGDEQDIDYSSIDWPITGGVLTDDSVESDEDEVVKDYEILLTGHEDGSVKFWDCTGVLLKPIYNFKTASIFGNEHEYREDGAADISAEQLDEGEPPFRKAGLFDPYSDDPRLAVKKIAFCPKTGQLVVGGTAGQIVIADFDTAAEDQSSLKYNSMNLVSDRDGFVWKGHDQLNVRANLLEDNAVPLTENGVNITGVLQVLPPASITCMALEANWGLVSGGTAHGLVLFDFKNFVPVFHRCTLNPNDLTGAGEQLSRRKSFKKSLRESFRKLRKGRSTRNNPTNQVPTTLEARPVERQIEARCTDDGLGSMVRCLLFAKTYVTNVNITSPTLWSATNASTVSVFLLHLPPAQTAATTVPPASGNVPPQASRRISAQLAKEIQLKHRAPVVGISIFDQTGSPVDQFNAGENGSPPHRLLIASEEQFKVFSLPQLKPINKYKLTANEGARIRRIHFGSFSCRISPELLQSLHSGSPTKSVRSHGEGDGAGNVSATSAAGRGDLYHEMALICLTNMGDIMVLSVPELKRQLNAAAVRREDINGISSLCFTNDGEALYMMSSSELQRIALSTSKVVQPTGIVEVEPLESEDNETASLVNDGNESDKDGEANKELANTASDTQPPVATLRAKPLELNADRSSLHLTNGISNSNSPNRANETITSSIGDITVDSVRDHLNTTTTTLCSTTTEETVGRLSVLSTQTNQATTTVNMKDIPDINIPNLMDLASKSNTTETSTSSVVIKSVITSISHEKTNGESENVTTKTTAHEESQF.

14 WD repeats span residues 39 to 72 (SALAYDPVAKLMAIGTQTGAIKVFGQPGVELYAQ), 82 to 128 (ELNV…DGKL), 131 to 167 (VSSLCCSLNKDLLWIGTEGGNIYQLDLKSFTIREPVI), 189 to 223 (SIRQLPNSLNKLLIAYNRGLCVLWDMQTSAVERAY), 231 to 263 (SVGLSVNSTGTEFSWYHADGSYATWSIDNGEPP), 278 to 320 (SINR…GHKV), 328 to 358 (VIDFFVTYKEGSDDVEVLIVLLEEELCAYDL), 380 to 464 (TCNY…YNFK), 513 to 595 (KKIA…TGVL), 604 to 665 (TCMA…LRES), 709 to 779 (VRCL…KEIQ), 788 to 833 (GISI…LKPI), 838 to 928 (LTAN…LNAA), and 942 to 965 (CFTNDGEALYMMSSSELQRIALST). A disordered region spans residues 867–888 (HSGSPTKSVRSHGEGDGAGNVS). 2 disordered regions span residues 975-1002 (VEVEPLESEDNETASLVNDGNESDKDGE) and 1144-1166 (HEKTNGESENVTTKTTAHEESQF).

Belongs to the WD repeat L(2)GL family. As to quaternary structure, may form multimeric complexes. Interacts with mahj. Interacts with aPKC; the interaction results in phosphorylation of l(2)gl. Interacts with ball. In terms of processing, phosphorylated by aPKC which restricts l(2)gl activity to the oocyte posterior and is required for oocyte polarity formation. In terms of tissue distribution, expressed in the epithelial cells of the digestive tract and in gonads, in the ovary's nurse and oocyte's follicle cells.

The protein resides in the cell membrane. It is found in the secreted. It localises to the extracellular space. The protein localises to the extracellular matrix. Essential for the development of polarized epithelia, for cell polarity associated with asymmetric cell division of neuroblasts during development, and for oocyte polarity formation. Promotes the formation of actin-rich projections at the oocyte cortex and the posterior enrichment of par-1 which is required for oocyte polarization. Regulates the localization of axis-specifying morphogens such as stau and grk. Could act as a tumor suppressor. The protein is Lethal(2) giant larvae protein (l(2)gl) of Drosophila pseudoobscura pseudoobscura (Fruit fly).